The following is a 491-amino-acid chain: MDRRDMTISAWRQQLQSGEVSSRELVDQHLKRLESSEPSLNAFVEVTADQARAEASRIDEARAAGEALGPLAGLPLAIKDNLCTKGVRTTCSSRMLEQFVPPYESTVTERLWQAGGVLVGKTNLDEFAMGGSTETSAFGATQNPWNTAHVPGGSSGGSAAAVAAGSCVASLGSDTGGSIRQPASFCGVVGLKPTYGRVSRWGLVAFASSLDQVGPFAGSVADVAELLQVIAGPDPRDSTCLDAAVPVFSDGLSQSIKGLKVGLIKECFDAEGLDPEVKASVQASAAQLEALGAELVEVSCPRFNDGIATYYVIAPSEASANLARYDGVKYGFRAEDAESLAAMTARSRAEAFGAEVQRRILIGTYALSAGYVDAYYKKAQQVRTLIRRDFDAAFKSVDVLLTPTAPSTAFKAGAHADDPLAMYLADLLTIPVNLAGLPAISVPCGFSAAGLPIGMQLIGNVLDEPRLLQVAHQYEQAAQVFASRPEAALVP.

Residues Lys79 and Ser154 each act as charge relay system in the active site. The active-site Acyl-ester intermediate is the Ser178.

This sequence belongs to the amidase family. GatA subfamily. In terms of assembly, heterotrimer of A, B and C subunits.

The catalysed reaction is L-glutamyl-tRNA(Gln) + L-glutamine + ATP + H2O = L-glutaminyl-tRNA(Gln) + L-glutamate + ADP + phosphate + H(+). Functionally, allows the formation of correctly charged Gln-tRNA(Gln) through the transamidation of misacylated Glu-tRNA(Gln) in organisms which lack glutaminyl-tRNA synthetase. The reaction takes place in the presence of glutamine and ATP through an activated gamma-phospho-Glu-tRNA(Gln). The polypeptide is Glutamyl-tRNA(Gln) amidotransferase subunit A (Synechococcus sp. (strain CC9605)).